A 69-amino-acid chain; its full sequence is uncharacterized protein (69 aa).

The stretch at 21-64 (LNLLKGGEEKISEVELKLDEMEKKMDSLLVQLEDLHRDNNDLAK) forms a coiled coil.

This is an uncharacterized protein from Saccharomyces cerevisiae (strain ATCC 204508 / S288c) (Baker's yeast).